Consider the following 500-residue polypeptide: Aspartyl/glutamyl-tRNA(Asn/Gln) amidotransferase subunit B (500 aa).

The protein belongs to the GatB/GatE family. GatB subfamily. Heterotrimer of A, B and C subunits.

It catalyses the reaction L-glutamyl-tRNA(Gln) + L-glutamine + ATP + H2O = L-glutaminyl-tRNA(Gln) + L-glutamate + ADP + phosphate + H(+). The enzyme catalyses L-aspartyl-tRNA(Asn) + L-glutamine + ATP + H2O = L-asparaginyl-tRNA(Asn) + L-glutamate + ADP + phosphate + 2 H(+). Allows the formation of correctly charged Asn-tRNA(Asn) or Gln-tRNA(Gln) through the transamidation of misacylated Asp-tRNA(Asn) or Glu-tRNA(Gln) in organisms which lack either or both of asparaginyl-tRNA or glutaminyl-tRNA synthetases. The reaction takes place in the presence of glutamine and ATP through an activated phospho-Asp-tRNA(Asn) or phospho-Glu-tRNA(Gln). The polypeptide is Aspartyl/glutamyl-tRNA(Asn/Gln) amidotransferase subunit B (Sinorhizobium fredii (strain NBRC 101917 / NGR234)).